The sequence spans 312 residues: tRNA-dihydrouridine(16) synthase (312 aa).

FMN is bound by residues 7–9 and glutamine 68; that span reads PME. Cysteine 98 serves as the catalytic Proton donor. FMN contacts are provided by residues lysine 139, 200 to 202, and 224 to 225; these read NGE and GR.

It belongs to the Dus family. DusC subfamily. FMN serves as cofactor.

The catalysed reaction is 5,6-dihydrouridine(16) in tRNA + NADP(+) = uridine(16) in tRNA + NADPH + H(+). It catalyses the reaction 5,6-dihydrouridine(16) in tRNA + NAD(+) = uridine(16) in tRNA + NADH + H(+). Catalyzes the synthesis of 5,6-dihydrouridine (D), a modified base found in the D-loop of most tRNAs, via the reduction of the C5-C6 double bond in target uridines. Specifically modifies U16 in tRNAs. This is tRNA-dihydrouridine(16) synthase from Salmonella typhimurium (strain LT2 / SGSC1412 / ATCC 700720).